Reading from the N-terminus, the 539-residue chain is Membrane protein insertase YidC (539 aa).

5 helical membrane-spanning segments follow: residues 6-26 (TLLV…WQVA), 341-361 (SVIQ…TFIV), 416-436 (LGGC…YWAL), 454-474 (LSAQ…MFLI), and 495-515 (PVMF…YWLV).

It belongs to the OXA1/ALB3/YidC family. Type 1 subfamily. In terms of assembly, interacts with the Sec translocase complex via SecD. Specifically interacts with transmembrane segments of nascent integral membrane proteins during membrane integration.

Its subcellular location is the cell inner membrane. In terms of biological role, required for the insertion and/or proper folding and/or complex formation of integral membrane proteins into the membrane. Involved in integration of membrane proteins that insert both dependently and independently of the Sec translocase complex, as well as at least some lipoproteins. Aids folding of multispanning membrane proteins. This Vibrio vulnificus (strain YJ016) protein is Membrane protein insertase YidC.